A 1040-amino-acid polypeptide reads, in one-letter code: Multidrug resistance protein MdtB (1040 aa).

Helical transmembrane passes span 16 to 36, 347 to 367, 369 to 389, 396 to 416, 440 to 460, 472 to 492, 537 to 557, 863 to 883, 888 to 908, 911 to 931, 968 to 988, and 998 to 1018; these read FIMR…AGII, LMMA…NIPA, IIPG…MVFL, LTLM…IVVI, IGFT…PLLF, FAIT…TLTP, WLTL…WVFI, LGST…VLGI, FIHP…ALLA, IAGS…IGIV, ILMT…STGV, and IGMV…TPVI.

The protein belongs to the resistance-nodulation-cell division (RND) (TC 2.A.6) family. MdtB subfamily. In terms of assembly, part of a tripartite efflux system composed of MdtA, MdtB and MdtC. MdtB forms a heteromultimer with MdtC.

Its subcellular location is the cell inner membrane. Its function is as follows. The MdtABC tripartite complex confers resistance against novobiocin and deoxycholate. In Escherichia coli O9:H4 (strain HS), this protein is Multidrug resistance protein MdtB.